The primary structure comprises 594 residues: Alpha-1,4-glucan:maltose-1-phosphate maltosyltransferase (594 aa).

The segment at 244–270 (NRKGRNNSLTPGPDDPGSPYAIGSEEG) is disordered. Positions 246, 306, and 341 each coordinate alpha-maltose 1-phosphate. The active-site Nucleophile is Asp377. Asn378 contacts alpha-maltose 1-phosphate. Glu406 acts as the Proton donor in catalysis. Residue 517–518 (KY) participates in alpha-maltose 1-phosphate binding.

Belongs to the glycosyl hydrolase 13 family. GlgE subfamily. In terms of assembly, homodimer.

The catalysed reaction is alpha-maltose 1-phosphate + [(1-&gt;4)-alpha-D-glucosyl](n) = [(1-&gt;4)-alpha-D-glucosyl](n+2) + phosphate. In terms of biological role, maltosyltransferase that uses maltose 1-phosphate (M1P) as the sugar donor to elongate linear or branched alpha-(1-&gt;4)-glucans. Is involved in a branched alpha-glucan biosynthetic pathway from trehalose, together with TreS, Mak and GlgB. The polypeptide is Alpha-1,4-glucan:maltose-1-phosphate maltosyltransferase (Cereibacter sphaeroides (Rhodobacter sphaeroides)).